A 375-amino-acid polypeptide reads, in one-letter code: Histidine biosynthesis bifunctional protein HisB (375 aa).

The segment at 1-168 (MTPIVFIDRD…GIAHTLADAP (168 aa)) is histidinol-phosphatase. The active-site Nucleophile is the Asp8. 3 residues coordinate Mg(2+): Asp8, Asp10, and Asp128. Asp10 acts as the Proton donor in catalysis. Residues 169 to 375 (RRAVVQRHTK…HVLPSTKGAL (207 aa)) are imidazoleglycerol-phosphate dehydratase.

In the N-terminal section; belongs to the histidinol-phosphatase family. It in the C-terminal section; belongs to the imidazoleglycerol-phosphate dehydratase family. Mg(2+) serves as cofactor.

It is found in the cytoplasm. The enzyme catalyses D-erythro-1-(imidazol-4-yl)glycerol 3-phosphate = 3-(imidazol-4-yl)-2-oxopropyl phosphate + H2O. It catalyses the reaction L-histidinol phosphate + H2O = L-histidinol + phosphate. It functions in the pathway amino-acid biosynthesis; L-histidine biosynthesis; L-histidine from 5-phospho-alpha-D-ribose 1-diphosphate: step 6/9. Its pathway is amino-acid biosynthesis; L-histidine biosynthesis; L-histidine from 5-phospho-alpha-D-ribose 1-diphosphate: step 8/9. This chain is Histidine biosynthesis bifunctional protein HisB, found in Xylella fastidiosa (strain Temecula1 / ATCC 700964).